We begin with the raw amino-acid sequence, 224 residues long: UPF0758 protein Tbd_2588 (224 aa).

Positions 102-224 constitute an MPN domain; that stretch reads ALSSPAAVRD…ALSFAEAGHL (123 aa). 3 residues coordinate Zn(2+): H173, H175, and D186. The JAMM motif motif lies at 173-186; sequence HNHPSGVNEPSQAD.

This sequence belongs to the UPF0758 family.

The protein is UPF0758 protein Tbd_2588 of Thiobacillus denitrificans (strain ATCC 25259 / T1).